A 901-amino-acid chain; its full sequence is Alanine--tRNA ligase (901 aa).

Residues His-600, His-604, Cys-704, and His-708 each coordinate Zn(2+).

It belongs to the class-II aminoacyl-tRNA synthetase family. Zn(2+) serves as cofactor.

It is found in the cytoplasm. The enzyme catalyses tRNA(Ala) + L-alanine + ATP = L-alanyl-tRNA(Ala) + AMP + diphosphate. In terms of biological role, catalyzes the attachment of alanine to tRNA(Ala) in a two-step reaction: alanine is first activated by ATP to form Ala-AMP and then transferred to the acceptor end of tRNA(Ala). Also edits incorrectly charged Ser-tRNA(Ala) and Gly-tRNA(Ala) via its editing domain. The chain is Alanine--tRNA ligase from Ignicoccus hospitalis (strain KIN4/I / DSM 18386 / JCM 14125).